The sequence spans 302 residues: Methionyl-tRNA formyltransferase (302 aa).

Serine 107–proline 110 lines the (6S)-5,6,7,8-tetrahydrofolate pocket.

This sequence belongs to the Fmt family.

It carries out the reaction L-methionyl-tRNA(fMet) + (6R)-10-formyltetrahydrofolate = N-formyl-L-methionyl-tRNA(fMet) + (6S)-5,6,7,8-tetrahydrofolate + H(+). Functionally, attaches a formyl group to the free amino group of methionyl-tRNA(fMet). The formyl group appears to play a dual role in the initiator identity of N-formylmethionyl-tRNA by promoting its recognition by IF2 and preventing the misappropriation of this tRNA by the elongation apparatus. This chain is Methionyl-tRNA formyltransferase, found in Leifsonia xyli subsp. xyli (strain CTCB07).